The following is a 117-amino-acid chain: DNA-directed RNA polymerase subunit omega (117 aa).

This sequence belongs to the RNA polymerase subunit omega family. In terms of assembly, the RNAP catalytic core consists of 2 alpha, 1 beta, 1 beta' and 1 omega subunit. When a sigma factor is associated with the core the holoenzyme is formed, which can initiate transcription.

The catalysed reaction is RNA(n) + a ribonucleoside 5'-triphosphate = RNA(n+1) + diphosphate. Promotes RNA polymerase assembly. Latches the N- and C-terminal regions of the beta' subunit thereby facilitating its interaction with the beta and alpha subunits. This chain is DNA-directed RNA polymerase subunit omega, found in Cereibacter sphaeroides (strain ATCC 17025 / ATH 2.4.3) (Rhodobacter sphaeroides).